Consider the following 338-residue polypeptide: DNA-directed RNA polymerase subunit alpha (338 aa).

An alpha N-terminal domain (alpha-NTD) region spans residues 1 to 233; that stretch reads MLREEVAVST…DLFIPFLHAE (233 aa). The alpha C-terminal domain (alpha-CTD) stretch occupies residues 266 to 338; the sequence is IALKFIFIDQ…IDLPKNKFSN (73 aa).

The protein belongs to the RNA polymerase alpha chain family. As to quaternary structure, in plastids the minimal PEP RNA polymerase catalytic core is composed of four subunits: alpha, beta, beta', and beta''. When a (nuclear-encoded) sigma factor is associated with the core the holoenzyme is formed, which can initiate transcription.

It is found in the plastid. The protein localises to the chloroplast. It catalyses the reaction RNA(n) + a ribonucleoside 5'-triphosphate = RNA(n+1) + diphosphate. DNA-dependent RNA polymerase catalyzes the transcription of DNA into RNA using the four ribonucleoside triphosphates as substrates. The sequence is that of DNA-directed RNA polymerase subunit alpha from Nandina domestica (Heavenly bamboo).